We begin with the raw amino-acid sequence, 164 residues long: MTGAVCPGSFDPVTNGHLDVIGRVAAQFDEVVVTVLINKSKRGMFTIDERIEMLEDATSHLPNVRVTSWHGLLVDYAKQEGLSAIVKGLRGANDFDYELQMAQMNQKLTGVDTLFVATNPTYSYLSSSLVKEVATFGGDVSDMLPAKVHSRLLARIAERAAENS.

S9 contacts substrate. ATP-binding positions include 9–10 (SF) and H17. Residues K41, L73, and K87 each coordinate substrate. Residues 88–90 (GLR), E98, and 122–128 (YSYLSSS) each bind ATP.

Belongs to the bacterial CoaD family. In terms of assembly, homohexamer. The cofactor is Mg(2+).

It localises to the cytoplasm. The catalysed reaction is (R)-4'-phosphopantetheine + ATP + H(+) = 3'-dephospho-CoA + diphosphate. Its pathway is cofactor biosynthesis; coenzyme A biosynthesis; CoA from (R)-pantothenate: step 4/5. Functionally, reversibly transfers an adenylyl group from ATP to 4'-phosphopantetheine, yielding dephospho-CoA (dPCoA) and pyrophosphate. In Rhodococcus erythropolis (strain PR4 / NBRC 100887), this protein is Phosphopantetheine adenylyltransferase.